Here is a 448-residue protein sequence, read N- to C-terminus: Probable glycine dehydrogenase (decarboxylating) subunit 1 (448 aa).

It belongs to the GcvP family. N-terminal subunit subfamily. As to quaternary structure, the glycine cleavage system is composed of four proteins: P, T, L and H. In this organism, the P 'protein' is a heterodimer of two subunits.

The enzyme catalyses N(6)-[(R)-lipoyl]-L-lysyl-[glycine-cleavage complex H protein] + glycine + H(+) = N(6)-[(R)-S(8)-aminomethyldihydrolipoyl]-L-lysyl-[glycine-cleavage complex H protein] + CO2. Its function is as follows. The glycine cleavage system catalyzes the degradation of glycine. The P protein binds the alpha-amino group of glycine through its pyridoxal phosphate cofactor; CO(2) is released and the remaining methylamine moiety is then transferred to the lipoamide cofactor of the H protein. In Staphylococcus aureus (strain USA300), this protein is Probable glycine dehydrogenase (decarboxylating) subunit 1.